Here is a 598-residue protein sequence, read N- to C-terminus: Peptidoglycan D,D-transpeptidase FtsI homolog (598 aa).

Residues 12–33 traverse the membrane as a helical segment; it reads IVLVWILFFSGSSLLLGRLFYL. Ser291 (acyl-ester intermediate) is an active-site residue.

The protein belongs to the transpeptidase family.

Its subcellular location is the plastid. It is found in the chloroplast membrane. The enzyme catalyses Preferential cleavage: (Ac)2-L-Lys-D-Ala-|-D-Ala. Also transpeptidation of peptidyl-alanyl moieties that are N-acyl substituents of D-alanine.. This chain is Peptidoglycan D,D-transpeptidase FtsI homolog (ftsI), found in Mesostigma viride (Green alga).